We begin with the raw amino-acid sequence, 363 residues long: Peptide chain release factor 1 (363 aa).

An N5-methylglutamine modification is found at Gln-237.

This sequence belongs to the prokaryotic/mitochondrial release factor family. Methylated by PrmC. Methylation increases the termination efficiency of RF1.

It is found in the cytoplasm. Functionally, peptide chain release factor 1 directs the termination of translation in response to the peptide chain termination codons UAG and UAA. The polypeptide is Peptide chain release factor 1 (Hydrogenovibrio crunogenus (strain DSM 25203 / XCL-2) (Thiomicrospira crunogena)).